Reading from the N-terminus, the 153-residue chain is Histone H2A (153 aa).

2 disordered regions span residues 1–27 (MDTG…VSRS) and 131–153 (KAAA…PKKA). Positions 132-147 (AAAAATKEPKSPAKAT) are enriched in low complexity. The short motif at 149-152 (SPKK) is the SPKK motif element.

This sequence belongs to the histone H2A family. In terms of assembly, the nucleosome is a histone octamer containing two molecules each of H2A, H2B, H3 and H4 assembled in one H3-H4 heterotetramer and two H2A-H2B heterodimers. The octamer wraps approximately 147 bp of DNA.

It localises to the nucleus. Its subcellular location is the chromosome. Its function is as follows. Core component of nucleosome. Nucleosomes wrap and compact DNA into chromatin, limiting DNA accessibility to the cellular machineries which require DNA as a template. Histones thereby play a central role in transcription regulation, DNA repair, DNA replication and chromosomal stability. DNA accessibility is regulated via a complex set of post-translational modifications of histones, also called histone code, and nucleosome remodeling. The sequence is that of Histone H2A from Euphorbia esula (Leafy spurge).